The sequence spans 406 residues: Argininosuccinate synthase (406 aa).

ATP contacts are provided by residues 10–18 (AYSGGLDTS) and Ala37. L-citrulline-binding residues include Tyr88 and Ser93. Gly118 provides a ligand contact to ATP. L-aspartate is bound by residues Thr120, Asn124, and Asp125. Residue Asn124 coordinates L-citrulline. Arg128, Ser179, Ser188, Glu264, and Tyr276 together coordinate L-citrulline.

It belongs to the argininosuccinate synthase family. Type 1 subfamily. In terms of assembly, homotetramer.

The protein localises to the cytoplasm. The enzyme catalyses L-citrulline + L-aspartate + ATP = 2-(N(omega)-L-arginino)succinate + AMP + diphosphate + H(+). The protein operates within amino-acid biosynthesis; L-arginine biosynthesis; L-arginine from L-ornithine and carbamoyl phosphate: step 2/3. The protein is Argininosuccinate synthase of Dinoroseobacter shibae (strain DSM 16493 / NCIMB 14021 / DFL 12).